A 391-amino-acid chain; its full sequence is 4-coumarate--CoA ligase (391 aa).

This sequence belongs to the ATP-dependent AMP-binding enzyme family.

It carries out the reaction (E)-4-coumarate + ATP + CoA = (E)-4-coumaroyl-CoA + AMP + diphosphate. Its function is as follows. Converts p-coumaric acid into p-coumaryl CoA. This is necessary for the activation of the photoactive yellow protein (PYP) chromophore. The protein is 4-coumarate--CoA ligase (pcl) of Halorhodospira halophila (Ectothiorhodospira halophila).